A 270-amino-acid chain; its full sequence is Putative carboxymethylenebutenolidase (270 aa).

Residues Cys147, Asp204, and His236 contribute to the active site.

This sequence belongs to the dienelactone hydrolase family.

The enzyme catalyses 2-(5-oxo-2,5-dihydrofuran-2-ylidene)acetate + H2O = 4-oxohex-2-enedioate + H(+). This Salmonella typhimurium (strain LT2 / SGSC1412 / ATCC 700720) protein is Putative carboxymethylenebutenolidase (ysgA).